Reading from the N-terminus, the 168-residue chain is Dihydrofolate reductase (168 aa).

The region spanning 1–159 (MISFIFAMDA…YDYEFLMYEK (159 aa)) is the DHFR domain. 5-7 (IFA) lines the substrate pocket. NADP(+) contacts are provided by residues 6-7 (FA) and 14-19 (IGKDND). Position 27 (D27) interacts with substrate. 43 to 46 (GRKT) is an NADP(+) binding site. R57 serves as a coordination point for substrate. NADP(+) is bound by residues 62-65 (VTSA) and 95-100 (IGGAQL). T114 is a binding site for substrate.

The protein belongs to the dihydrofolate reductase family.

The enzyme catalyses (6S)-5,6,7,8-tetrahydrofolate + NADP(+) = 7,8-dihydrofolate + NADPH + H(+). It functions in the pathway cofactor biosynthesis; tetrahydrofolate biosynthesis; 5,6,7,8-tetrahydrofolate from 7,8-dihydrofolate: step 1/1. Its function is as follows. Key enzyme in folate metabolism. Catalyzes an essential reaction for de novo glycine and purine synthesis, and for DNA precursor synthesis. The polypeptide is Dihydrofolate reductase (dfrA) (Bacillus subtilis (strain 168)).